Here is a 469-residue protein sequence, read N- to C-terminus: UDP-N-acetylmuramoylalanine--D-glutamate ligase (469 aa).

Position 125-131 (Gly125–Thr131) interacts with ATP.

It belongs to the MurCDEF family.

The protein localises to the cytoplasm. The catalysed reaction is UDP-N-acetyl-alpha-D-muramoyl-L-alanine + D-glutamate + ATP = UDP-N-acetyl-alpha-D-muramoyl-L-alanyl-D-glutamate + ADP + phosphate + H(+). The protein operates within cell wall biogenesis; peptidoglycan biosynthesis. In terms of biological role, cell wall formation. Catalyzes the addition of glutamate to the nucleotide precursor UDP-N-acetylmuramoyl-L-alanine (UMA). In Prochlorococcus marinus (strain NATL2A), this protein is UDP-N-acetylmuramoylalanine--D-glutamate ligase.